We begin with the raw amino-acid sequence, 84 residues long: ATP synthase subunit c (84 aa).

The next 2 membrane-spanning stretches (helical) occupy residues 9 to 29 and 54 to 74; these read IIGASLLLAFAALGTAIGFAI and IVAGLLDAIAMIAVGISLLFI.

It belongs to the ATPase C chain family. As to quaternary structure, F-type ATPases have 2 components, F(1) - the catalytic core - and F(0) - the membrane proton channel. F(1) has five subunits: alpha(3), beta(3), gamma(1), delta(1), epsilon(1). F(0) has three main subunits: a(1), b(2) and c(10-14). The alpha and beta chains form an alternating ring which encloses part of the gamma chain. F(1) is attached to F(0) by a central stalk formed by the gamma and epsilon chains, while a peripheral stalk is formed by the delta and b chains.

The protein resides in the cell inner membrane. F(1)F(0) ATP synthase produces ATP from ADP in the presence of a proton or sodium gradient. F-type ATPases consist of two structural domains, F(1) containing the extramembraneous catalytic core and F(0) containing the membrane proton channel, linked together by a central stalk and a peripheral stalk. During catalysis, ATP synthesis in the catalytic domain of F(1) is coupled via a rotary mechanism of the central stalk subunits to proton translocation. In terms of biological role, key component of the F(0) channel; it plays a direct role in translocation across the membrane. A homomeric c-ring of between 10-14 subunits forms the central stalk rotor element with the F(1) delta and epsilon subunits. In Haemophilus ducreyi (strain 35000HP / ATCC 700724), this protein is ATP synthase subunit c.